The primary structure comprises 444 residues: Docking protein 3 (444 aa).

The PH domain occupies 7–123 (PVKDGLLYQQ…WMDPICQLAF (117 aa)). The segment at 47-66 (DVRDGGLGPGGDRPAGPGRR) is disordered. S138 carries the phosphoserine modification. Residues 157 to 261 (EVAEFPVVVQ…ARQRERLPEL (105 aa)) form the IRS-type PTB domain. Residues S274, S308, and S314 each carry the phosphoserine modification. The residue at position 325 (Y325) is a Phosphotyrosine. The tract at residues 354 to 390 (GLSNGGPEAQEGPPGGRSPLGSPIYHNSEELSWPGSA) is disordered. Low complexity predominate over residues 358–376 (GGPEAQEGPPGGRSPLGSP). Position 371 is a phosphoserine (S371).

It belongs to the DOK family. Type A subfamily. As to quaternary structure, on tyrosine phosphorylation, interacts with CSK and INPP5D/SHIP1 via their SH2 domains. Binds ABL1 through the PTB domain and in a kinase-dependent manner. Does not interact with RasGAP. Post-translationally, constitutively tyrosine-phosphorylated. On IL2 stimulation, phosphorylated on C-terminal tyrosine residues possibly by Src kinases. Can also be phosphorylated by ABL1 kinase.

Its subcellular location is the cytoplasm. The protein localises to the cell membrane. In terms of biological role, DOK proteins are enzymatically inert adaptor or scaffolding proteins. They provide a docking platform for the assembly of multimolecular signaling complexes. DOK3 is a negative regulator of JNK signaling in B-cells through interaction with INPP5D/SHIP1. May modulate ABL1 function. The polypeptide is Docking protein 3 (Dok3) (Rattus norvegicus (Rat)).